The chain runs to 468 residues: Hexokinase (468 aa).

One can recognise a Hexokinase domain in the interval 10–466 (AKQLAELEVV…SGKGAALIAD (457 aa)). Residues 74-225 (TGAEVGEAYA…NVPAVCKAIV (152 aa)) form a hexokinase small subdomain region. 85 to 90 (DFGGST) contacts ATP. Residues 163–189 (PVGFTFSFPCAQAALNSSFLIEWTKGF) form a glucose-binding region. The tract at residues 226–455 (NDTVGTLVSC…KNIHYCIADD (230 aa)) is hexokinase large subdomain.

This sequence belongs to the hexokinase family.

It catalyses the reaction a D-hexose + ATP = a D-hexose 6-phosphate + ADP + H(+). It carries out the reaction D-mannose + ATP = D-mannose 6-phosphate + ADP + H(+). The catalysed reaction is D-fructose + ATP = D-fructose 6-phosphate + ADP + H(+). The enzyme catalyses D-glucose + ATP = D-glucose 6-phosphate + ADP + H(+). It participates in carbohydrate metabolism; hexose metabolism. It functions in the pathway carbohydrate degradation; glycolysis; D-glyceraldehyde 3-phosphate and glycerone phosphate from D-glucose: step 1/4. Catalyzes the phosphorylation of various hexoses to hexose 6-phosphate. The protein is Hexokinase (HXK) of Toxoplasma gondii.